Reading from the N-terminus, the 392-residue chain is Cell division protein DivIB (392 aa).

Residues 1–88 (MSEKDNNLTP…TQSSEAPIEN (88 aa)) are disordered. Residues 1-131 (MSEKDNNLTP…KGSAPLLKKM (131 aa)) are Cytoplasmic-facing. Residues 14–32 (KHLEYQKRKAEEAKKEKKA) show a composition bias toward basic and acidic residues. Over residues 58 to 76 (TRDEAESAELLEEGFETNN) the composition is skewed to acidic residues. The chain crosses the membrane as a helical span at residues 132–152 (WPALAVVVLVFVGSLYLISPL). In terms of domain architecture, POTRA spans 153 to 224 (SKISTFSVSG…NRFEAIVKEH (72 aa)). Residues 153-392 (SKISTFSVSG…TAQSTTTSSN (240 aa)) are Extracellular-facing. The interval 368–392 (ISAQNAKKTDASSENTAQSTTTSSN) is disordered.

It belongs to the FtsQ/DivIB family. DivIB subfamily.

Its subcellular location is the cell membrane. Functionally, cell division protein that may be involved in stabilizing or promoting the assembly of the division complex. The protein is Cell division protein DivIB of Lactococcus lactis subsp. lactis (strain KF147).